A 186-amino-acid polypeptide reads, in one-letter code: Biofilm operon icaADBC HTH-type negative transcriptional regulator IcaR (186 aa).

The 59-residue stretch at 1–59 folds into the HTH tetR-type domain; the sequence is MKDKIIDNAITLFSEKGYDGTTLDDIAKSVNIKKASLYYHFDSKKSIYEQSVKCCFDYL. The segment at residues 22 to 41 is a DNA-binding region (H-T-H motif); sequence TLDDIAKSVNIKKASLYYHF.

As to quaternary structure, homodimer.

In terms of biological role, represses transcription of the icaADBC operon necessary for biofilm production. This Staphylococcus aureus (strain NCTC 8325 / PS 47) protein is Biofilm operon icaADBC HTH-type negative transcriptional regulator IcaR (icaR).